The following is a 633-amino-acid chain: MKLDWERTGRRMGFIDLSKYEVWSYDTECTGLQYKVDKVFGFSIATPDGQSGYFDVREQPESLQWLAEQVEPYKGTIVCHNASFDYRMSLHSGIKLPLSQIDDTGIRACCINEHESTIFPWTRGRAGDYSLDYLAKKYVGAQKYAEIYDELAALFGGKATRKTQMPNLYRAPSGLVRKYACPDAELTLELWLEQEELIKKRGLERIVAFERKVMPTLIRTEARGVRVDLDYAEQAIFKMDGVVRENQAKMFALAGREFNPNSPKQVREVFGAKEEGGVWKSRDGTILERTATGNPCLDADALRSMTDPLAAAVLELRSNIKTKDTFLAKHVVEHSVGGRVYPNINQMKGEDGGTGTGRLSYTGPALQQIPSRNKRIAAIIKPAFLPEEGQLWLDSDMASFEVRIFAHLVAAYNPAIAKAYAENPELDLHQWVGDLMGIPRNASYSGQPNAKQMNLGMIFNRGDGAVADSLGMPWEWCEFTDKKGELIRYKKAGREAKSIIAAYHSQIQGVKTLATRAQKIAEERGWIQTAHGRRLRFPNGYKSYKASGILIQATAADENKENWLRIEDALGSDGSMILNTHDSYSMSVDENWKPIWERVKKAVERQTLRVPLLLEFDGVGKNWAEAKGLIDVH.

Belongs to the DNA polymerase type-A family. DpoZ subfamily.

The catalysed reaction is DNA(n) + a 2'-deoxyribonucleoside 5'-triphosphate = DNA(n+1) + diphosphate. It catalyses the reaction dZTP + DNA(n) = DNA(n)-Z + diphosphate. DNA polymerase that preferentially incorporates the non-canonical base aminoadenine/dZTP instead of adenine into the synthesized DNA. More efficient in using dZTP instead of dATP as a substrate. In addition to this preference for dZTP, the phage also encodes a dATP triphosphohydrolase that removes dATP and its precursor dADP from the nucleotide pool of the host. The chain is DNA polymerase DpoZ (dpoZ) from Vibrio phage phiVC8.